A 194-amino-acid chain; its full sequence is Cysteine and glycine-rich protein 3 (194 aa).

The segment at 1–5 is interaction with TCAP; it reads MPNWG. The LIM zinc-binding 1 domain maps to 10-61; it reads CGACDKTVYHAEEIQCNGRSFHKTCFHCMACRKALDSTTVAAHESEIYCKVC. Residues 64 to 69 carry the Nuclear localization signal motif; sequence RKYGPK. The interval 94–105 is interaction with CLF2; the sequence is QSPKPARAATTS. Residues Ser-95, Ser-111, and Ser-153 each carry the phosphoserine modification. The LIM zinc-binding 2 domain occupies 120–171; it reads CPRCGKSVYAAEKVMGGGKPWHKTCFPCAICGKSLESTNVTDKDGELYCKVC.

As to quaternary structure, self-associates. Oligomeric in the cytoplasm and monomeric in the nucleus. Homooligomers preferentially form along the actin cytoskeleton. Interacts with TCAP, ACTN2 and NRAP. Interacts with LDHD, SPTB, MYOD1, MYOG, MYF6. Interacts with GLRX3 (via C-terminus); GLRX3 and calcineurin compete for interaction with CSRP3. Interacts with CFL2; the stoichiometry influences F-actin depolymerization and possibly two molecules of CFL2 can interact with one molecule of CSRP3 resulting in the highest functional impact; the interaction is stronger with phosphorylated CFL2. Phosphorylated by PKC/PRKCA. In terms of tissue distribution, high in striated muscle and adult heart.

It localises to the nucleus. The protein resides in the cytoplasm. Its subcellular location is the cytoskeleton. It is found in the myofibril. The protein localises to the sarcomere. It localises to the z line. Its function is as follows. Positive regulator of myogenesis. Acts as a cofactor for myogenic bHLH transcription factors such as MYOD1, and probably MYOG and MYF6. Enhances the DNA-binding activity of the MYOD1:TCF3 isoform E47 complex and may promote formation of a functional MYOD1:TCF3 isoform E47:MEF2A complex involved in myogenesis. Plays a crucial and specific role in the organization of cytosolic structures in cardiomyocytes. Could play a role in mechanical stretch sensing. May be a scaffold protein that promotes the assembly of interacting proteins at Z-line structures. It is essential for calcineurin anchorage to the Z line. Required for stress-induced calcineurin-NFAT activation. The role in regulation of cytoskeleton dynamics by association with CFL2 is reported conflictingly. Proposed to contribute to the maintenance of muscle cell integrity through an actin-based mechanism. Can directly bind to actin filaments, cross-link actin filaments into bundles without polarity selectivity and protect them from dilution- and cofilin-mediated depolymerization; the function seems to involve its self-association. In vitro can inhibit PKC/PRKCA activity. Proposed to be involved in cardiac stress signaling by down-regulating excessive PKC/PRKCA signaling. The chain is Cysteine and glycine-rich protein 3 (Csrp3) from Rattus norvegicus (Rat).